Here is a 611-residue protein sequence, read N- to C-terminus: Chaperone protein DnaK (611 aa).

Residue Thr-173 is modified to Phosphothreonine; by autocatalysis. The segment covering Ala-579–Ala-592 has biased composition (low complexity). Residues Ala-579–Lys-611 form a disordered region. Residues Val-600–Lys-611 show a composition bias toward acidic residues.

This sequence belongs to the heat shock protein 70 family.

In terms of biological role, acts as a chaperone. The polypeptide is Chaperone protein DnaK (Bacillus mycoides (strain KBAB4) (Bacillus weihenstephanensis)).